A 171-amino-acid polypeptide reads, in one-letter code: Endoribonuclease YbeY (171 aa).

Zn(2+) contacts are provided by histidine 130, histidine 134, and histidine 140.

The protein belongs to the endoribonuclease YbeY family. Requires Zn(2+) as cofactor.

It localises to the cytoplasm. Its function is as follows. Single strand-specific metallo-endoribonuclease involved in late-stage 70S ribosome quality control and in maturation of the 3' terminus of the 16S rRNA. The polypeptide is Endoribonuclease YbeY (Neisseria gonorrhoeae (strain ATCC 700825 / FA 1090)).